The primary structure comprises 374 residues: Probable inactive patatin-3-Kuras 1 (374 aa).

The first 11 residues, 1–11 (MMLATTSSTFA), serve as a signal peptide directing secretion. A PNPLA domain is found at 20-217 (LSIDGGGIKG…AAVDPSLLSI (198 aa)). A GXGXXG motif is present at residues 24–29 (GGGIKG). Asn48 and Asn191 each carry an N-linked (GlcNAc...) asparagine glycan. Asp204 functions as the Proton acceptor in the catalytic mechanism. An N-linked (GlcNAc...) asparagine glycan is attached at Asn257.

This sequence belongs to the patatin family. Post-translationally, N-glycosylated. As to expression, tuber.

It localises to the vacuole. The protein is Probable inactive patatin-3-Kuras 1 (pat3-k1) of Solanum tuberosum (Potato).